The primary structure comprises 611 residues: Leukotriene A-4 hydrolase (611 aa).

Residue Lys73 is modified to N6-acetyllysine. A peptide contacts are provided by residues 135–137 (QCQ) and 267–272 (PYGGME). His296 is a binding site for Zn(2+). Glu297 (proton acceptor) is an active-site residue. Zn(2+) is bound by residues His300 and Glu319. Lys337 carries the N6-acetyllysine modification. The active-site Proton donor is Tyr384. At Lys414 the chain carries N6-acetyllysine. A Phosphoserine modification is found at Ser416. 564–566 (RMK) provides a ligand contact to a peptide. Lys573 is modified (N6-acetyllysine).

It belongs to the peptidase M1 family. Monomer. Zn(2+) is required as a cofactor. In terms of processing, phosphorylation at Ser-416 inhibits leukotriene-A4 hydrolase activity.

It localises to the cytoplasm. It carries out the reaction leukotriene A4 + H2O = leukotriene B4. The enzyme catalyses (5S,6S)-epoxy-(18R)-hydroxy-(7E,9E,11Z,14Z,16E)-eicosapentaenoate + H2O = resolvin E1. The catalysed reaction is (5S,6S)-epoxy-(18S)-hydroxy-(7E,9E,11Z,14Z,16E)-eicosapentaenoate + H2O = 18S-resolvin E1. It catalyses the reaction Release of the N-terminal residue from a tripeptide.. It participates in lipid metabolism; leukotriene B4 biosynthesis. With respect to regulation, inhibited by bestatin. The epoxide hydrolase activity is restrained by suicide inactivation that involves binding of LTA4 to Tyr-379. 4-(4-benzylphenyl)thiazol-2-amine (ARM1) selectively inhibits the epoxide hydrolase activity. Bifunctional zinc metalloenzyme that comprises both epoxide hydrolase (EH) and aminopeptidase activities. Acts as an epoxide hydrolase to catalyze the conversion of LTA4 to the pro-inflammatory mediator leukotriene B4 (LTB4). Also has aminopeptidase activity, with high affinity for N-terminal arginines of various synthetic tripeptides. In addition to its pro-inflammatory EH activity, may also counteract inflammation by its aminopeptidase activity, which inactivates by cleavage another neutrophil attractant, the tripeptide Pro-Gly-Pro (PGP), a bioactive fragment of collagen generated by the action of matrix metalloproteinase-9 (MMP9) and prolylendopeptidase (PREPL). Involved also in the biosynthesis of resolvin E1 and 18S-resolvin E1 from eicosapentaenoic acid, two lipid mediators that show potent anti-inflammatory and pro-resolving actions. The protein is Leukotriene A-4 hydrolase (Lta4h) of Mus musculus (Mouse).